The sequence spans 264 residues: 3-methyl-2-oxobutanoate hydroxymethyltransferase (264 aa).

D45 and D84 together coordinate Mg(2+). 3-methyl-2-oxobutanoate is bound by residues 45–46 (DS), D84, and K112. E114 contacts Mg(2+). The active-site Proton acceptor is the E181.

This sequence belongs to the PanB family. As to quaternary structure, homodecamer; pentamer of dimers. Requires Mg(2+) as cofactor.

It is found in the cytoplasm. The catalysed reaction is 3-methyl-2-oxobutanoate + (6R)-5,10-methylene-5,6,7,8-tetrahydrofolate + H2O = 2-dehydropantoate + (6S)-5,6,7,8-tetrahydrofolate. The protein operates within cofactor biosynthesis; (R)-pantothenate biosynthesis; (R)-pantoate from 3-methyl-2-oxobutanoate: step 1/2. In terms of biological role, catalyzes the reversible reaction in which hydroxymethyl group from 5,10-methylenetetrahydrofolate is transferred onto alpha-ketoisovalerate to form ketopantoate. This Escherichia coli O1:K1 / APEC protein is 3-methyl-2-oxobutanoate hydroxymethyltransferase.